The sequence spans 243 residues: uncharacterized protein (243 aa).

A helical membrane pass occupies residues 55 to 75 (IILIILLTIFMVISTLVIAFV).

The protein resides in the membrane. This is an uncharacterized protein from Rickettsia prowazekii (strain Madrid E).